The following is a 940-amino-acid chain: Isoleucine--tRNA ligase (940 aa).

The short motif at Pro59–His69 is the 'HIGH' region element. L-isoleucyl-5'-AMP is bound at residue Glu563. Residues Lys604–Ser608 carry the 'KMSKS' region motif. Lys607 provides a ligand contact to ATP. Zn(2+) is bound by residues Cys903, Cys906, Cys923, and Cys926.

It belongs to the class-I aminoacyl-tRNA synthetase family. IleS type 1 subfamily. In terms of assembly, monomer. The cofactor is Zn(2+).

It is found in the cytoplasm. It catalyses the reaction tRNA(Ile) + L-isoleucine + ATP = L-isoleucyl-tRNA(Ile) + AMP + diphosphate. In terms of biological role, catalyzes the attachment of isoleucine to tRNA(Ile). As IleRS can inadvertently accommodate and process structurally similar amino acids such as valine, to avoid such errors it has two additional distinct tRNA(Ile)-dependent editing activities. One activity is designated as 'pretransfer' editing and involves the hydrolysis of activated Val-AMP. The other activity is designated 'posttransfer' editing and involves deacylation of mischarged Val-tRNA(Ile). In Wigglesworthia glossinidia brevipalpis, this protein is Isoleucine--tRNA ligase.